Reading from the N-terminus, the 318-residue chain is D-alanine--D-alanine ligase B (318 aa).

The 199-residue stretch at 117 to 315 folds into the ATP-grasp domain; sequence KQVWLSLGLS…FEALVWRVLE (199 aa). 146–201 is a binding site for ATP; that stretch reads AEQIGLPVIVKPANEGSSVGVSRVFDQAQLDEAVTLAARYDGALLMEQLIEGDELT. Mg(2+) is bound by residues Asp268, Glu282, and Asn284.

Belongs to the D-alanine--D-alanine ligase family. Requires Mg(2+) as cofactor. It depends on Mn(2+) as a cofactor.

It localises to the cytoplasm. It catalyses the reaction 2 D-alanine + ATP = D-alanyl-D-alanine + ADP + phosphate + H(+). Its pathway is cell wall biogenesis; peptidoglycan biosynthesis. In terms of biological role, cell wall formation. The sequence is that of D-alanine--D-alanine ligase B from Xanthomonas campestris pv. campestris (strain ATCC 33913 / DSM 3586 / NCPPB 528 / LMG 568 / P 25).